The primary structure comprises 115 residues: MSDIIKRIEAEQMTKELPEFGPGDTVVVQVKVKEGSNERLQAYEGVVIAKKNRGLNSSFIVRKISHGVGVERTFQTYSPLVDSVEVKRRGDVRRAKLYYLRDLSGKAARIKEKVK.

This sequence belongs to the bacterial ribosomal protein bL19 family.

Functionally, this protein is located at the 30S-50S ribosomal subunit interface and may play a role in the structure and function of the aminoacyl-tRNA binding site. The polypeptide is Large ribosomal subunit protein bL19 (Hydrogenovibrio crunogenus (strain DSM 25203 / XCL-2) (Thiomicrospira crunogena)).